A 483-amino-acid polypeptide reads, in one-letter code: Aspartyl/glutamyl-tRNA(Asn/Gln) amidotransferase subunit B (483 aa).

It belongs to the GatB/GatE family. GatB subfamily. As to quaternary structure, heterotrimer of A, B and C subunits.

It carries out the reaction L-glutamyl-tRNA(Gln) + L-glutamine + ATP + H2O = L-glutaminyl-tRNA(Gln) + L-glutamate + ADP + phosphate + H(+). It catalyses the reaction L-aspartyl-tRNA(Asn) + L-glutamine + ATP + H2O = L-asparaginyl-tRNA(Asn) + L-glutamate + ADP + phosphate + 2 H(+). Allows the formation of correctly charged Asn-tRNA(Asn) or Gln-tRNA(Gln) through the transamidation of misacylated Asp-tRNA(Asn) or Glu-tRNA(Gln) in organisms which lack either or both of asparaginyl-tRNA or glutaminyl-tRNA synthetases. The reaction takes place in the presence of glutamine and ATP through an activated phospho-Asp-tRNA(Asn) or phospho-Glu-tRNA(Gln). In Anaplasma phagocytophilum (strain HZ), this protein is Aspartyl/glutamyl-tRNA(Asn/Gln) amidotransferase subunit B.